The sequence spans 425 residues: Enolase (425 aa).

(2R)-2-phosphoglycerate is bound at residue Q163. Residue E205 is the Proton donor of the active site. Positions 242, 285, and 312 each coordinate Mg(2+). K337, R366, S367, and K388 together coordinate (2R)-2-phosphoglycerate. K337 functions as the Proton acceptor in the catalytic mechanism.

Belongs to the enolase family. Requires Mg(2+) as cofactor.

The protein localises to the cytoplasm. Its subcellular location is the secreted. It localises to the cell surface. It catalyses the reaction (2R)-2-phosphoglycerate = phosphoenolpyruvate + H2O. It functions in the pathway carbohydrate degradation; glycolysis; pyruvate from D-glyceraldehyde 3-phosphate: step 4/5. Functionally, catalyzes the reversible conversion of 2-phosphoglycerate (2-PG) into phosphoenolpyruvate (PEP). It is essential for the degradation of carbohydrates via glycolysis. The protein is Enolase of Paracoccus denitrificans (strain Pd 1222).